We begin with the raw amino-acid sequence, 316 residues long: L-lactate dehydrogenase (316 aa).

34–39 contacts NAD(+); sequence DVVEGV. The substrate site is built by Arg89, Asn121, and Arg152. Asn121 lines the NAD(+) pocket. His172 (proton acceptor) is an active-site residue.

This sequence belongs to the LDH/MDH superfamily. LDH family. As to quaternary structure, homotetramer.

It carries out the reaction (S)-lactate + NAD(+) = pyruvate + NADH + H(+). Its pathway is fermentation; pyruvate fermentation to lactate; (S)-lactate from pyruvate: step 1/1. This is L-lactate dehydrogenase from Botryococcus braunii (Green alga).